Reading from the N-terminus, the 324-residue chain is Probable uridine nucleosidase 1 (324 aa).

Residue His-248 is part of the active site.

The protein belongs to the IUNH family.

It localises to the cytoplasm. The catalysed reaction is uridine + H2O = D-ribose + uracil. In terms of biological role, involved in pyrimidine breakdown. The sequence is that of Probable uridine nucleosidase 1 (URH1) from Oryza sativa subsp. japonica (Rice).